The following is a 68-amino-acid chain: Peptide Hp1090 (68 aa).

Residues 1-23 (MKTQFAIFLITLVLFQMFSQSDA) form the signal peptide. Phe-36 bears the Phenylalanine amide mark. Residues 40–68 (GLSDLDDLDESFDGEVSQADIDFLKELMQ) constitute a propeptide that is removed on maturation.

Belongs to the non-disulfide-bridged peptide (NDBP) superfamily. Short antimicrobial peptide (group 4) family. As to expression, expressed by the venom gland.

It localises to the secreted. The protein localises to the target cell membrane. Amphipathic peptide which inhibits the growth of Gram-positive bacteria. The sequence is that of Peptide Hp1090 from Heterometrus petersii (Asian forest scorpion).